A 342-amino-acid chain; its full sequence is Dihydroorotase (342 aa).

2 residues coordinate Zn(2+): His-13 and His-15. Substrate is bound by residues 15–17 and Asn-41; that span reads HLR. 3 residues coordinate Zn(2+): Lys-98, His-135, and His-173. Lys-98 carries the post-translational modification N6-carboxylysine. His-135 is a substrate binding site. Residue Leu-218 participates in substrate binding. Zn(2+) is bound at residue Asp-246. Residue Asp-246 is part of the active site. Substrate is bound by residues His-250 and Ala-262.

It belongs to the metallo-dependent hydrolases superfamily. DHOase family. Class II DHOase subfamily. In terms of assembly, homodimer. Zn(2+) serves as cofactor.

The enzyme catalyses (S)-dihydroorotate + H2O = N-carbamoyl-L-aspartate + H(+). It participates in pyrimidine metabolism; UMP biosynthesis via de novo pathway; (S)-dihydroorotate from bicarbonate: step 3/3. Its function is as follows. Catalyzes the reversible cyclization of carbamoyl aspartate to dihydroorotate. This chain is Dihydroorotase, found in Vibrio parahaemolyticus serotype O3:K6 (strain RIMD 2210633).